The primary structure comprises 80 residues: Biotin synthase auxiliary protein (80 aa).

This sequence belongs to the BsaP family. Requires iron-sulfur cluster as cofactor.

Functionally, required for the activity of the biotin synthase BioB. In Mycobacterium leprae (strain TN), this protein is Biotin synthase auxiliary protein.